A 260-amino-acid chain; its full sequence is Snake venom serine protease KN6 (260 aa).

Positions 1-18 (MVLIRVLANLLILQLSYA) are cleaved as a signal peptide. The propeptide occupies 19–24 (QKSSEL). A Peptidase S1 domain is found at 25-251 (VIGGDECNIN…HLDWIQSIIA (227 aa)). 5 disulfides stabilise this stretch: cysteine 31–cysteine 165, cysteine 100–cysteine 258, cysteine 144–cysteine 212, cysteine 176–cysteine 191, and cysteine 202–cysteine 227. Histidine 67 acts as the Charge relay system in catalysis. Residue asparagine 105 is glycosylated (N-linked (GlcNAc...) asparagine). The Charge relay system role is filled by aspartate 112. N-linked (GlcNAc...) asparagine glycosylation occurs at asparagine 172. Serine 206 serves as the catalytic Charge relay system. N-linked (GlcNAc...) asparagine glycans are attached at residues asparagine 213 and asparagine 255.

This sequence belongs to the peptidase S1 family. Snake venom subfamily. As to quaternary structure, monomer. Expressed by the venom gland.

Its subcellular location is the secreted. Snake venom serine protease that may act in the hemostasis system of the prey. This is Snake venom serine protease KN6 from Trimeresurus stejnegeri (Chinese green tree viper).